A 224-amino-acid polypeptide reads, in one-letter code: Flagellar L-ring protein (224 aa).

Residues 1–15 (MARYFILAAALLLTA) form the signal peptide. Cys-16 carries N-palmitoyl cysteine lipidation. Residue Cys-16 is the site of S-diacylglycerol cysteine attachment.

The protein belongs to the FlgH family. As to quaternary structure, the basal body constitutes a major portion of the flagellar organelle and consists of four rings (L,P,S, and M) mounted on a central rod.

It localises to the cell outer membrane. The protein localises to the bacterial flagellum basal body. Its function is as follows. Assembles around the rod to form the L-ring and probably protects the motor/basal body from shearing forces during rotation. The sequence is that of Flagellar L-ring protein from Shewanella sp. (strain MR-4).